Consider the following 684-residue polypeptide: MGTVSSRRLWWPLPLLLLLLLGPPGARAQEDDDGDYEELVLALRSEEDGPADALQHGATATFHRCAKDPWRLPGTYVVVLKDSDAHRSQPERTARRLQAQAARRGYLIKLLHVFHHLLPGFLVKMSRDLLELALRLPHVDYIEEDSSVFAQSIPWNLERITPARYRADEYQPPNGGSLVEVYLLDTSIQSSHREIEGRVMVTDFESVPEEDGTRFHRQASKCDSHGTHLAGVVSGRDAGVAKGASLRSLHVLNCQGKGTVSSALIGLEFIRKSQLVQPVGPLVVLLPLAGGYSRVLNAACRRLAGAGVVLVAAAGNFRDDACLYSPASAPEVITVGATNAQDQPLTLGTLGTNFGRCVDLFAPGEDIIGASSDCSTCFVSRSGTSQAAAHVAGIAAMMLSAEPELTLAELRQRLIHFSAKDVINEAWFPEDQRVLTPNLVATLPPSTHGAGWQLFCRTVWSAHSGPTRMATAMARCAPDEELLSCSSFSRSGKRRGERIEAQGGRRVCLAPNAFGGEGVYAVARCCLLPQANCSVHTAPPAGAGMGTRAHCHQQGHVLTGCSSHWEMKDLGTHKPPVLKPRGQPDQCMGHSGASTHASCCYAPGLECKVKEHGLPAPQEQVTVACEEGWTLTGCSALPGTSHVLGAYAVDDTCVVRSRDVSTTGSTSEEAVAAVAICCRSRHLA.

A signal peptide spans 1–28; the sequence is MGTVSSRRLWWPLPLLLLLLLGPPGARA. Positions 29–151 are excised as a propeptide; the sequence is QEDDDGDYEE…IEEDSSVFAQ (123 aa). Y36 carries the sulfotyrosine modification. S45 carries the post-translational modification Phosphoserine. Positions 75 to 148 constitute an Inhibitor I9 domain; it reads TYVVVLKDSD…VDYIEEDSSV (74 aa). Residues 154–460 enclose the Peptidase S8 domain; sequence PWNLERITPA…GWQLFCRTVW (307 aa). Active-site charge relay system residues include D185 and H225. 2 disulfide bridges follow: C222-C254 and C322-C357. S385 serves as the catalytic Charge relay system. The C-terminal domain stretch occupies residues 451-684; that stretch reads GWQLFCRTVW…AICCRSRHLA (234 aa). Intrachain disulfides connect C456–C526, C476–C525, and C485–C508. A glycan (N-linked (GlcNAc...) asparagine) is linked at N532. 6 disulfides stabilise this stretch: C533/C600, C551/C599, C561/C587, C607/C678, C625/C677, and C634/C653.

It belongs to the peptidase S8 family. Monomer. Can self-associate to form dimers and higher multimers which may have increased LDLR degrading activity. The precursor protein but not the mature protein may form multimers. Interacts with APOB, VLDLR, LRP8/APOER2 and BACE1. The full-length immature form (pro-PCSK9) interacts with SCNN1A, SCNN1B and SCNN1G. The pro-PCSK9 form (via C-terminal domain) interacts with LDLR. Interacts (via the C-terminal domain) with ANXA2 (via repeat Annexin 1); the interaction inhibits the degradation of LDLR. Requires Ca(2+) as cofactor. Cleavage by furin and PCSK5 generates a truncated inactive protein that is unable to induce LDLR degradation. Post-translationally, undergoes autocatalytic cleavage in the endoplasmic reticulum to release the propeptide from the N-terminus and the cleavage of the propeptide is strictly required for its maturation and activation. The cleaved propeptide however remains associated with the catalytic domain through non-covalent interactions, preventing potential substrates from accessing its active site. As a result, it is secreted from cells as a propeptide-containing, enzymatically inactive protein. In terms of processing, phosphorylation protects the propeptide against proteolysis.

It localises to the cytoplasm. The protein resides in the secreted. Its subcellular location is the endosome. The protein localises to the lysosome. It is found in the cell surface. It localises to the endoplasmic reticulum. The protein resides in the golgi apparatus. Its activity is regulated as follows. Its proteolytic activity is autoinhibited by the non-covalent binding of the propeptide to the catalytic domain. Inhibited by EGTA. In terms of biological role, crucial player in the regulation of plasma cholesterol homeostasis. Binds to low-density lipid receptor family members: low density lipoprotein receptor (LDLR), very low density lipoprotein receptor (VLDLR), apolipoprotein E receptor (LRP1/APOER) and apolipoprotein receptor 2 (LRP8/APOER2), and promotes their degradation in intracellular acidic compartments. Acts via a non-proteolytic mechanism to enhance the degradation of the hepatic LDLR through a clathrin LDLRAP1/ARH-mediated pathway. May prevent the recycling of LDLR from endosomes to the cell surface or direct it to lysosomes for degradation. Can induce ubiquitination of LDLR leading to its subsequent degradation. Inhibits intracellular degradation of APOB via the autophagosome/lysosome pathway in a LDLR-independent manner. Involved in the disposal of non-acetylated intermediates of BACE1 in the early secretory pathway. Inhibits epithelial Na(+) channel (ENaC)-mediated Na(+) absorption by reducing ENaC surface expression primarily by increasing its proteasomal degradation. Regulates neuronal apoptosis via modulation of LRP8/APOER2 levels and related anti-apoptotic signaling pathways. The chain is Proprotein convertase subtilisin/kexin type 9 (PCSK9) from Plecturocebus moloch (Dusky titi monkey).